Consider the following 477-residue polypeptide: Probable glycine dehydrogenase (decarboxylating) subunit 2 (477 aa).

An N6-(pyridoxal phosphate)lysine modification is found at Lys264.

It belongs to the GcvP family. C-terminal subunit subfamily. In terms of assembly, the glycine cleavage system is composed of four proteins: P, T, L and H. In this organism, the P 'protein' is a heterodimer of two subunits. It depends on pyridoxal 5'-phosphate as a cofactor.

The enzyme catalyses N(6)-[(R)-lipoyl]-L-lysyl-[glycine-cleavage complex H protein] + glycine + H(+) = N(6)-[(R)-S(8)-aminomethyldihydrolipoyl]-L-lysyl-[glycine-cleavage complex H protein] + CO2. The glycine cleavage system catalyzes the degradation of glycine. The P protein binds the alpha-amino group of glycine through its pyridoxal phosphate cofactor; CO(2) is released and the remaining methylamine moiety is then transferred to the lipoamide cofactor of the H protein. The polypeptide is Probable glycine dehydrogenase (decarboxylating) subunit 2 (Fervidobacterium nodosum (strain ATCC 35602 / DSM 5306 / Rt17-B1)).